Consider the following 872-residue polypeptide: DNA polymerase 1 (872 aa).

This sequence belongs to the DNA polymerase type-B family.

It catalyses the reaction DNA(n) + a 2'-deoxyribonucleoside 5'-triphosphate = DNA(n+1) + diphosphate. In Sulfurisphaera ohwakuensis, this protein is DNA polymerase 1 (pol-alpha).